Consider the following 133-residue polypeptide: Type VI secretion amidase effector 2 protein (133 aa).

Active-site residues include Cys-23 and His-73.

Belongs to the cell wall amidase Dae2/Tae2-like family.

Its subcellular location is the host periplasm. The protein localises to the secreted. It functions in the pathway cell wall degradation; peptidoglycan degradation. Functionally, toxic component of a contact-dependent interbacterial competition system (also called effector-immunity systems). Secreted by the SPI-6 type VI secretion system, probably into the periplasm of bacterial target cells. A cell wall amidase with specificity toward the D-meso-DAP-D-alanine bond (D-meso-diaminopimelic-D-alanine) found in peptidoglycan of Gram-negative bacteria. Toxicity is counteracted by a cognate immunity protein Tai2 (t2585), but not immunity proteins associated with a similar endopeptidase in other bacteria. In vitro degrades peptidoglycans from Gram-negative but not Gram-positive bacteria. This is Type VI secretion amidase effector 2 protein from Salmonella typhi.